The following is a 291-amino-acid chain: N-acetylmannosamine kinase (291 aa).

ATP is bound by residues 5-12 (AIDIGGTK) and 132-139 (GVGGGVVS). 4 residues coordinate Zn(2+): H156, C166, C168, and C173.

It belongs to the ROK (NagC/XylR) family. NanK subfamily. In terms of assembly, homodimer.

It catalyses the reaction an N-acyl-D-mannosamine + ATP = an N-acyl-D-mannosamine 6-phosphate + ADP + H(+). Its pathway is amino-sugar metabolism; N-acetylneuraminate degradation; D-fructose 6-phosphate from N-acetylneuraminate: step 2/5. In terms of biological role, catalyzes the phosphorylation of N-acetylmannosamine (ManNAc) to ManNAc-6-P. This chain is N-acetylmannosamine kinase (nanK1), found in Escherichia coli O6:H1 (strain CFT073 / ATCC 700928 / UPEC).